A 300-amino-acid polypeptide reads, in one-letter code: uncharacterized protein (300 aa).

Residues 1–11 (MYNEGVTSPSQ) show a composition bias toward polar residues. Residues 1-20 (MYNEGVTSPSQLARKKNATD) form a disordered region. A DNA-binding region (recombinase) is located at residues 1-92 (MYNEGVTSPS…QEILITRKRR (92 aa)). The stretch at 162–249 (SKENYFKELS…DLEFQKIEKE (88 aa)) forms a coiled coil.

This is an uncharacterized protein from Bacillus subtilis (strain 168).